Reading from the N-terminus, the 262-residue chain is uncharacterized protein (262 aa).

A BTB domain is found at 5 to 107 (PLISLDVEGV…MIEHKLRTFC (103 aa)). One can recognise a CRIB domain in the interval 182-195 (ISLPRNFTHIAHVG).

This is an uncharacterized protein from Caenorhabditis elegans.